The sequence spans 432 residues: D-amino acid dehydrogenase (432 aa).

Position 3–17 (3–17 (VVILGSGVVGVASAW)) interacts with FAD.

The protein belongs to the DadA oxidoreductase family. The cofactor is FAD.

The enzyme catalyses a D-alpha-amino acid + A + H2O = a 2-oxocarboxylate + AH2 + NH4(+). The protein operates within amino-acid degradation; D-alanine degradation; NH(3) and pyruvate from D-alanine: step 1/1. In terms of biological role, oxidative deamination of D-amino acids. The chain is D-amino acid dehydrogenase from Shigella boydii serotype 4 (strain Sb227).